A 342-amino-acid chain; its full sequence is Prostasin (342 aa).

The first 29 residues, 1–29, serve as a signal peptide directing secretion; sequence MAPRVGLGLGQLEAVTILLLLGLLQSGIR. Residues 30–32 constitute a propeptide, activation peptide; sequence ADG. 2 disulfides stabilise this stretch: Cys37/Cys154 and Cys70/Cys86. The Peptidase S1 domain occupies 45–286; it reads ITGGGSAKPG…YASWIHHHVA (242 aa). His85 acts as the Charge relay system in catalysis. Asn110 is a glycosylation site (N-linked (GlcNAc...) asparagine). The active-site Charge relay system is the Asp134. A glycan (N-linked (GlcNAc...) asparagine) is linked at Asn159. 3 disulfides stabilise this stretch: Cys168–Cys244, Cys201–Cys223, and Cys234–Cys262. Ser238 acts as the Charge relay system in catalysis. A helical membrane pass occupies residues 320–340; that stretch reads LLRPVLFLPLGLTLGLLSLWL. The propeptide occupies 323 to 342; it reads PVLFLPLGLTLGLLSLWLEH.

This sequence belongs to the peptidase S1 family. As to quaternary structure, heterodimer of two chains, light and heavy, held by a disulfide bond.

The protein resides in the cell membrane. Its subcellular location is the secreted. The protein localises to the extracellular space. Functionally, possesses a trypsin-like cleavage specificity with a preference for poly-basic substrates. Stimulates epithelial sodium channel (ENaC) activity through activating cleavage of the gamma subunits (SCNN1G). The sequence is that of Prostasin (Prss8) from Mus musculus (Mouse).